Here is a 249-residue protein sequence, read N- to C-terminus: Adenosylcobinamide-GDP ribazoletransferase (249 aa).

The next 6 membrane-spanning stretches (helical) occupy residues 32 to 52 (MVAF…TWFG), 53 to 73 (ATWL…WGAI), 107 to 127 (IGTM…LFVL), 136 to 156 (ALIV…FWFP), 190 to 210 (LLWW…IIIA), and 224 to 244 (TYGA…AALV).

It belongs to the CobS family. It depends on Mg(2+) as a cofactor.

It localises to the cell membrane. It catalyses the reaction alpha-ribazole + adenosylcob(III)inamide-GDP = adenosylcob(III)alamin + GMP + H(+). The enzyme catalyses alpha-ribazole 5'-phosphate + adenosylcob(III)inamide-GDP = adenosylcob(III)alamin 5'-phosphate + GMP + H(+). It functions in the pathway cofactor biosynthesis; adenosylcobalamin biosynthesis; adenosylcobalamin from cob(II)yrinate a,c-diamide: step 7/7. Functionally, joins adenosylcobinamide-GDP and alpha-ribazole to generate adenosylcobalamin (Ado-cobalamin). Also synthesizes adenosylcobalamin 5'-phosphate from adenosylcobinamide-GDP and alpha-ribazole 5'-phosphate. The protein is Adenosylcobinamide-GDP ribazoletransferase of Herpetosiphon aurantiacus (strain ATCC 23779 / DSM 785 / 114-95).